We begin with the raw amino-acid sequence, 166 residues long: MSEAIIAKKAELVDVVAGKMKAAASIVVVDARGLTVEQDTVLRRELRGSEVEYKVIKNSILRRAAEKAGLEDLASVFVGPSAVAFSNEDVIAPAKILNDFSKNAEALEIKGGAIEGAVASKEEILALATLPNREGLLSMLLSVLQAPVRNVALAVKAVAESKEDAA.

It belongs to the universal ribosomal protein uL10 family. Part of the ribosomal stalk of the 50S ribosomal subunit. The N-terminus interacts with L11 and the large rRNA to form the base of the stalk. The C-terminus forms an elongated spine to which L12 dimers bind in a sequential fashion forming a multimeric L10(L12)X complex.

In terms of biological role, forms part of the ribosomal stalk, playing a central role in the interaction of the ribosome with GTP-bound translation factors. The chain is Large ribosomal subunit protein uL10 from Streptococcus pneumoniae (strain 70585).